Consider the following 480-residue polypeptide: Selenium-binding protein 3 (480 aa).

Positions 12 and 13 each coordinate selenite.

Belongs to the selenium-binding protein family. Expressed in young seedlings, mostly in roots.

In Arabidopsis thaliana (Mouse-ear cress), this protein is Selenium-binding protein 3 (SBP3).